Here is a 378-residue protein sequence, read N- to C-terminus: Cytochrome b (378 aa).

4 helical membrane-spanning segments follow: residues 33-53, 77-98, 113-133, and 178-198; these read FGSLLGLCLVAQILTGLFLAM, WLIRNLHANGASFFFLCLYLHI, WNTGILLLLLIMVTAFVGYVL, and FFAFHFFIPFIATAVVALHFL. The heme b site is built by His83 and His97. Heme b contacts are provided by His182 and His196. His201 lines the a ubiquinone pocket. 4 consecutive transmembrane segments (helical) span residues 226–246, 288–308, 320–340, and 347–367; these read YKDLLGFLLLLAPLTALAVFS, LGGVLALLASILVLAVVPFLH, WSQLCLFTLVVTVLILTWIGG, and LTTVGQIASLLYFTIILFLMP.

Belongs to the cytochrome b family. As to quaternary structure, the cytochrome bc1 complex contains 3 respiratory subunits (MT-CYB, CYC1 and UQCRFS1), 2 core proteins (UQCRC1 and UQCRC2) and probably 6 low-molecular weight proteins. Heme b is required as a cofactor.

Its subcellular location is the mitochondrion inner membrane. Its function is as follows. Component of the ubiquinol-cytochrome c reductase complex (complex III or cytochrome b-c1 complex) that is part of the mitochondrial respiratory chain. The b-c1 complex mediates electron transfer from ubiquinol to cytochrome c. Contributes to the generation of a proton gradient across the mitochondrial membrane that is then used for ATP synthesis. The polypeptide is Cytochrome b (mt-cyb) (Indostomus paradoxus (Armoured stickleback)).